We begin with the raw amino-acid sequence, 618 residues long: Dihydroxy-acid dehydratase (618 aa).

Residue Asp-81 coordinates Mg(2+). Cys-122 contacts [2Fe-2S] cluster. Residues Asp-123 and Lys-124 each contribute to the Mg(2+) site. Lys-124 bears the N6-carboxylysine mark. Cys-195 serves as a coordination point for [2Fe-2S] cluster. Residue Glu-493 coordinates Mg(2+). The Proton acceptor role is filled by Ser-519.

The protein belongs to the IlvD/Edd family. In terms of assembly, homodimer. [2Fe-2S] cluster serves as cofactor. Mg(2+) is required as a cofactor.

It carries out the reaction (2R)-2,3-dihydroxy-3-methylbutanoate = 3-methyl-2-oxobutanoate + H2O. The catalysed reaction is (2R,3R)-2,3-dihydroxy-3-methylpentanoate = (S)-3-methyl-2-oxopentanoate + H2O. Its pathway is amino-acid biosynthesis; L-isoleucine biosynthesis; L-isoleucine from 2-oxobutanoate: step 3/4. The protein operates within amino-acid biosynthesis; L-valine biosynthesis; L-valine from pyruvate: step 3/4. Functionally, functions in the biosynthesis of branched-chain amino acids. Catalyzes the dehydration of (2R,3R)-2,3-dihydroxy-3-methylpentanoate (2,3-dihydroxy-3-methylvalerate) into 2-oxo-3-methylpentanoate (2-oxo-3-methylvalerate) and of (2R)-2,3-dihydroxy-3-methylbutanoate (2,3-dihydroxyisovalerate) into 2-oxo-3-methylbutanoate (2-oxoisovalerate), the penultimate precursor to L-isoleucine and L-valine, respectively. This is Dihydroxy-acid dehydratase from Shewanella amazonensis (strain ATCC BAA-1098 / SB2B).